The primary structure comprises 239 residues: Bidirectional sugar transporter SWEET8 (239 aa).

Over 1 to 6 (MVDAKQ) the chain is Extracellular. Residues 7–27 (VRFIIGVIGNVISFGLFAAPA) traverse the membrane as a helical segment. One can recognise a MtN3/slv 1 domain in the interval 9-98 (FIIGVIGNVI…VYLMYCGHKK (90 aa)). At 28-44 (KTFWRIFKKKSVEEFSY) the chain is on the cytoplasmic side. The chain crosses the membrane as a helical span at residues 45 to 65 (VPYVATVMNCMLWVFYGLPVV). Topologically, residues 66 to 69 (HKDS) are extracellular. A helical transmembrane segment spans residues 70-90 (ILVSTINGVGLVIELFYVGVY). Residues 91-103 (LMYCGHKKNHRRN) lie on the Cytoplasmic side of the membrane. The helical transmembrane segment at 104-124 (ILGFLALEVILVVAIILITLF) threads the bilayer. At 125 to 135 (ALKGDFVKQTF) the chain is on the extracellular side. The MtN3/slv 2 domain maps to 134 to 185 (TFVGVICDVFNIAMYGAPSLAIIKVVKTKSVEYMPFLLSLVCFVNAGIWTTY). The helical transmembrane segment at 136–156 (VGVICDVFNIAMYGAPSLAII) threads the bilayer. The Cytoplasmic portion of the chain corresponds to 157-168 (KVVKTKSVEYMP). Residues 169-189 (FLLSLVCFVNAGIWTTYSLIF) traverse the membrane as a helical segment. The Extracellular segment spans residues 190-194 (KIDYY). The helical transmembrane segment at 195-215 (VLASNGIGTFLALSQLIVYFM) threads the bilayer. Residues 216–239 (YYKSTPKEKTVKPSEVEISATERV) are Cytoplasmic-facing.

The protein belongs to the SWEET sugar transporter family. As to quaternary structure, forms homooligomers and heterooligomers with SWEET4, SWEET5, SWEET6, SWEET7, SWEET9, SWEET10, SWEET11, SWEET13, SWEET15, SWEET16 and SWEET17. In terms of tissue distribution, expressed in inflorescences, embryo sacs and pollen, and at a lower level in stems. Barely detected in roots, leaves and seedlings.

The protein localises to the cell membrane. In terms of biological role, mediates both low-affinity uptake and efflux of sugar across the plasma membrane. Required, in pollen, for microspore cell integrity and primexine pattern formation. This is Bidirectional sugar transporter SWEET8 from Arabidopsis thaliana (Mouse-ear cress).